Reading from the N-terminus, the 110-residue chain is U1-lycotoxin-Ls1kk (110 aa).

Positions 1 to 20 are cleaved as a signal peptide; the sequence is MKFVLLFGVLLVTLFSYSSA. The propeptide occupies 21–44; the sequence is EMFDDFDQADEDELLSLIEKEEAR. 4 cysteine pairs are disulfide-bonded: Cys-47-Cys-62, Cys-54-Cys-71, Cys-61-Cys-89, and Cys-73-Cys-87.

It belongs to the neurotoxin 19 (CSTX) family. 03 subfamily. Expressed by the venom gland.

The protein resides in the secreted. In Lycosa singoriensis (Wolf spider), this protein is U1-lycotoxin-Ls1kk.